The primary structure comprises 136 residues: DNA-directed RNA polymerase subunit omega (136 aa).

It belongs to the RNA polymerase subunit omega family. In terms of assembly, the RNAP catalytic core consists of 2 alpha, 1 beta, 1 beta' and 1 omega subunit. When a sigma factor is associated with the core the holoenzyme is formed, which can initiate transcription.

The catalysed reaction is RNA(n) + a ribonucleoside 5'-triphosphate = RNA(n+1) + diphosphate. Its function is as follows. Promotes RNA polymerase assembly. Latches the N- and C-terminal regions of the beta' subunit thereby facilitating its interaction with the beta and alpha subunits. The chain is DNA-directed RNA polymerase subunit omega from Methylorubrum extorquens (strain CM4 / NCIMB 13688) (Methylobacterium extorquens).